A 556-amino-acid polypeptide reads, in one-letter code: Formate--tetrahydrofolate ligase (556 aa).

Residue 65–72 participates in ATP binding; sequence TPAGEGKS.

The protein belongs to the formate--tetrahydrofolate ligase family.

The enzyme catalyses (6S)-5,6,7,8-tetrahydrofolate + formate + ATP = (6R)-10-formyltetrahydrofolate + ADP + phosphate. Its pathway is one-carbon metabolism; tetrahydrofolate interconversion. The sequence is that of Formate--tetrahydrofolate ligase from Streptococcus equi subsp. equi (strain 4047).